Reading from the N-terminus, the 129-residue chain is Prefoldin subunit 6 (129 aa).

Position 2 is an N-acetylalanine (alanine 2). Lysine 21 bears the N6-acetyllysine mark. At lysine 66 the chain carries N6-acetyllysine; alternate. A Glycyl lysine isopeptide (Lys-Gly) (interchain with G-Cter in SUMO1); alternate cross-link involves residue lysine 66. Lysine 66 participates in a covalent cross-link: Glycyl lysine isopeptide (Lys-Gly) (interchain with G-Cter in SUMO2); alternate.

It belongs to the prefoldin subunit beta family. In terms of assembly, heterohexamer of two PFD-alpha type and four PFD-beta type subunits. Component of the PAQosome complex which is responsible for the biogenesis of several protein complexes and which consists of R2TP complex members RUVBL1, RUVBL2, RPAP3 and PIH1D1, URI complex members PFDN2, PFDN6, PDRG1, UXT and URI1 as well as ASDURF, POLR2E and DNAAF10/WDR92.

Its function is as follows. Binds specifically to cytosolic chaperonin (c-CPN) and transfers target proteins to it. Binds to nascent polypeptide chain and promotes folding in an environment in which there are many competing pathways for nonnative proteins. This chain is Prefoldin subunit 6 (PFDN6), found in Bos taurus (Bovine).